We begin with the raw amino-acid sequence, 634 residues long: Lamin tail domain-containing protein 2 (634 aa).

The disordered stretch occupies residues 1-44; the sequence is MRWLRPAGRRREQESVSGHLGPPAGAPAAPETPTCLPDTTPHPA. Positions 106–169 form a coiled coil; the sequence is SHSQEKLLQN…QKSCLLQLAR (64 aa). Residues 228–237 show a composition bias toward polar residues; sequence FTNMEPSSKQ. 2 disordered regions span residues 228–349 and 464–575; these read FTNM…TDPD and HRIP…PAEA. The span at 276–287 shows a compositional bias: low complexity; it reads SSSGGADSDSSS. Polar residues predominate over residues 310–321; that stretch reads SEQALVQAGSYS. The segment covering 322 to 337 has biased composition (basic and acidic residues); that stretch reads RDSEDLQKTHSPRHGE. Residues 350–468 form the LTD domain; the sequence is HWSPELLQSP…EVLSEHRIPR (119 aa). The segment covering 502-513 has biased composition (basic residues); the sequence is PPRPPRPLRKGR. Residues 540–550 are compositionally biased toward basic and acidic residues; sequence HAREGPARPEN.

The sequence is that of Lamin tail domain-containing protein 2 (LMNTD2) from Homo sapiens (Human).